Consider the following 430-residue polypeptide: Enolase (430 aa).

Position 164 (Gln164) interacts with (2R)-2-phosphoglycerate. Glu206 serves as the catalytic Proton donor. Residues Asp243, Glu288, and Asp315 each coordinate Mg(2+). Residues Lys340, Arg369, Ser370, and Lys391 each coordinate (2R)-2-phosphoglycerate. Lys340 (proton acceptor) is an active-site residue.

The protein belongs to the enolase family. Requires Mg(2+) as cofactor.

The protein resides in the cytoplasm. It is found in the secreted. It localises to the cell surface. The enzyme catalyses (2R)-2-phosphoglycerate = phosphoenolpyruvate + H2O. Its pathway is carbohydrate degradation; glycolysis; pyruvate from D-glyceraldehyde 3-phosphate: step 4/5. Catalyzes the reversible conversion of 2-phosphoglycerate (2-PG) into phosphoenolpyruvate (PEP). It is essential for the degradation of carbohydrates via glycolysis. This chain is Enolase, found in Lysinibacillus sphaericus (strain C3-41).